A 179-amino-acid polypeptide reads, in one-letter code: NADH-quinone oxidoreductase subunit B (179 aa).

Cysteine 53, cysteine 54, cysteine 118, and cysteine 148 together coordinate [4Fe-4S] cluster.

The protein belongs to the complex I 20 kDa subunit family. As to quaternary structure, NDH-1 is composed of 14 different subunits. Subunits NuoB, C, D, E, F, and G constitute the peripheral sector of the complex. [4Fe-4S] cluster is required as a cofactor.

The protein resides in the cell membrane. It carries out the reaction a quinone + NADH + 5 H(+)(in) = a quinol + NAD(+) + 4 H(+)(out). NDH-1 shuttles electrons from NADH, via FMN and iron-sulfur (Fe-S) centers, to quinones in the respiratory chain. The immediate electron acceptor for the enzyme in this species is believed to be a menaquinone. Couples the redox reaction to proton translocation (for every two electrons transferred, four hydrogen ions are translocated across the cytoplasmic membrane), and thus conserves the redox energy in a proton gradient. The sequence is that of NADH-quinone oxidoreductase subunit B from Bacillus thuringiensis (strain Al Hakam).